A 400-amino-acid polypeptide reads, in one-letter code: Leukosialin (400 aa).

Positions 1-19 (MATLLLLLGVLVVSPDALG) are cleaved as a signal peptide. Residues 20–253 (STTAVQTPTS…PFRNPDENSR (234 aa)) are Extracellular-facing. O-linked (GalNAc...) threonine glycosylation is found at Thr-21, Thr-22, Thr-26, and Thr-28. Polar residues-rich tracts occupy residues 21–51 (TTAV…SITS) and 58–112 (TGDQ…TPHA). The segment at 21-224 (TTAVQTPTSG…SSGASGPQVS (204 aa)) is disordered. Residues Ser-29 and Ser-35 are each glycosylated (O-linked (GalNAc...) serine). An O-linked (GalNAc...) threonine glycan is attached at Thr-36. Residues Ser-37, Ser-41, and Ser-42 are each glycosylated (O-linked (GalNAc...) serine). Residues Thr-46 and Thr-47 are each glycosylated (O-linked (GalNAc...) threonine). An O-linked (GalNAc...) serine glycan is attached at Ser-48. O-linked (GalNAc...) threonine glycosylation is found at Thr-50, Thr-58, and Thr-69. 2 O-linked (GalNAc...) serine glycosylation sites follow: Ser-99 and Ser-103. O-linked (GalNAc...) threonine glycosylation is found at Thr-109 and Thr-113. A glycan (O-linked (GalNAc...) serine) is linked at Ser-114. 2 stretches are compositionally biased toward polar residues: residues 121–164 (TANS…SRGT) and 172–182 (ATVSLETSKGT). Thr-136, Thr-137, Thr-173, and Thr-178 each carry an O-linked (GalNAc...) threonine glycan. Over residues 196 to 211 (TSTGTTGPPVTMTTGS) the composition is skewed to low complexity. A compositionally biased stretch (polar residues) spans 212-224 (LEPSSGASGPQVS). The N-linked (GlcNAc...) asparagine glycan is linked to Asn-239. Residues 254-276 (GMLPVAVLVALLAVIVLVALLLL) form a helical membrane-spanning segment. The Cytoplasmic portion of the chain corresponds to 277–400 (WRRRQKRRTG…EPEGGDGAAP (124 aa)). A required for interaction with EZR, MSN and RDX and for co-localization to microvilli region spans residues 278-308 (RRRQKRRTGALVLSRGGKRNGVVDAWAGPAQ). The short motif at 282–296 (KRRTGALVLSRGGKR) is the Nuclear localization signal element. Position 291 is a phosphoserine (Ser-291). A compositionally biased stretch (gly residues) spans 320 to 332 (GGSGGDKGSGFPD). The tract at residues 320 to 400 (GGSGGDKGSG…EPEGGDGAAP (81 aa)) is disordered. Phosphoserine is present on Ser-336. Thr-341 is modified (phosphothreonine). Ser-351 carries the post-translational modification Phosphoserine. Ser-355 is subject to Phosphoserine; by PKC/PRKCQ. Residues Ser-368 and Ser-379 each carry the phosphoserine modification.

In terms of assembly, interacts with SIGLEC1. As to quaternary structure, monomer. Interacts with CTNNB1. Interacts with RDX (via FERM domain), EZR and MSN. Glycosylated; has a high content of sialic acid and O-linked carbohydrate structures. In terms of processing, phosphorylation at Ser-355 is regulated by chemokines, requires its association with ERM proteins (EZR, RDX and MSN) and is essential for its function in the regulation of T-cell trafficking to lymph nodes. Post-translationally, has a high content of sialic acid and O-linked carbohydrate structures. Cleavage by CTSG releases its extracellular domain and triggers its intramembrane proteolysis by gamma-secretase releasing the CD43 cytoplasmic tail chain (CD43-ct) which translocates to the nucleus. In terms of processing, sumoylated. As to expression, cell surface of thymocytes, T-lymphocytes, neutrophils, plasma cells and myelomas.

The protein localises to the membrane. It localises to the cell projection. The protein resides in the microvillus. Its subcellular location is the uropodium. It is found in the nucleus. The protein localises to the PML body. Its function is as follows. Predominant cell surface sialoprotein of leukocytes which regulates multiple T-cell functions, including T-cell activation, proliferation, differentiation, trafficking and migration. Positively regulates T-cell trafficking to lymph-nodes via its association with ERM proteins (EZR, RDX and MSN). Negatively regulates Th2 cell differentiation and predisposes the differentiation of T-cells towards a Th1 lineage commitment. Promotes the expression of IFN-gamma by T-cells during T-cell receptor (TCR) activation of naive cells and induces the expression of IFN-gamma by CD4(+) T-cells and to a lesser extent by CD8(+) T-cells. Plays a role in preparing T-cells for cytokine sensing and differentiation into effector cells by inducing the expression of cytokine receptors IFNGR and IL4R, promoting IFNGR and IL4R signaling and by mediating the clustering of IFNGR with TCR. Acts as a major E-selectin ligand responsible for Th17 cell rolling on activated vasculature and recruitment during inflammation. Mediates Th17 cells, but not Th1 cells, adhesion to E-selectin. Acts as a T-cell counter-receptor for SIGLEC1. In terms of biological role, protects cells from apoptotic signals, promoting cell survival. The protein is Leukosialin (SPN) of Homo sapiens (Human).